The following is a 165-amino-acid chain: Probable velvet family sexual development regulator CC1G_12219 (165 aa).

The 121-residue stretch at 1 to 121 (MSNTDAQTSF…SVWGAQVNVR (121 aa)) folds into the Velvet domain.

This sequence belongs to the velvet family.

It is found in the nucleus. In terms of biological role, velvet-domain-containing protein that probably acts as a positive regulator of sexual development. This chain is Probable velvet family sexual development regulator CC1G_12219, found in Coprinopsis cinerea (strain Okayama-7 / 130 / ATCC MYA-4618 / FGSC 9003) (Inky cap fungus).